The chain runs to 708 residues: Lactotransferrin (708 aa).

The signal sequence occupies residues 1–19 (MKLLFLALLSLLALGPSLA). Transferrin-like domains lie at 25–352 (VRWC…NLKE) and 364–693 (VVWC…NLRQ). Intrachain disulfides connect cysteine 28/cysteine 64 and cysteine 38/cysteine 55. Fe(3+) is bound at residue aspartate 79. Residue arginine 92 is part of the active site. Tyrosine 111 provides a ligand contact to Fe(3+). Disulfide bonds link cysteine 134–cysteine 217, cysteine 176–cysteine 192, cysteine 179–cysteine 202, cysteine 189–cysteine 200, and cysteine 250–cysteine 264. Residue threonine 136 coordinates hydrogencarbonate. Residue asparagine 139 is glycosylated (N-linked (GlcNAc...) asparagine). 3 residues coordinate hydrogencarbonate: arginine 140, alanine 142, and glycine 143. A Fe(3+)-binding site is contributed by tyrosine 211. Residue histidine 272 coordinates Fe(3+). The Nucleophile role is filled by serine 278. 2 disulfides stabilise this stretch: cysteine 367/cysteine 399 and cysteine 377/cysteine 390. A glycan (N-linked (GlcNAc...) asparagine) is linked at asparagine 385. Positions 414 and 452 each coordinate Fe(3+). 4 disulfide bridges follow: cysteine 476-cysteine 551, cysteine 510-cysteine 524, cysteine 521-cysteine 534, and cysteine 592-cysteine 606. Hydrogencarbonate-binding residues include threonine 478, arginine 482, alanine 484, and glycine 485. Asparagine 495 carries N-linked (GlcNAc...) asparagine glycosylation. Tyrosine 545 is a Fe(3+) binding site. A Fe(3+)-binding site is contributed by histidine 614.

It belongs to the transferrin family. In terms of assembly, monomer. Found in a complex with LTF, CLU, EPPIN and SEMG1. Interacts with prey activated coagulation factor X; the interaction inhibits coagulation factor X catalytic activity. Found in a complex with MPO and LTF; interacts directly with CP, allows Fe(3+) incorporation into LTF and activation of CP ferroxidase activity. Post-translationally, N-glycosylated. Glycosylation is important for draculin anticoagulant activity. Probably also O-glycosylated. Expressed in the submaxillary gland and secreted in the saliva (at protein level).

The protein localises to the secreted. Functionally, transferrins are iron binding transport proteins which can bind two Fe(3+) ions in association with the binding of an anion, usually bicarbonate. Its function is as follows. Major iron-binding and multifunctional protein found in exocrine fluids such as breast milk and mucosal secretions. Has antimicrobial activity. Antimicrobial properties may include bacteriostasis, which is related to its ability to sequester free iron and thus inhibit microbial growth, as well as direct bactericidal properties leading to the release of lipopolysaccharides from the bacterial outer membrane. May have anabolic, differentiating and anti-apoptotic effects on osteoblasts and may also inhibit osteoclastogenesis, possibly playing a role in the regulation of bone growth. May interfere with the lipopolysaccharide (LPS)-stimulated TLR4 signaling. The lactotransferrin transferrin-like domain 1 functions as a serine protease of the peptidase S60 family that cuts arginine rich regions. This function contributes to the antimicrobial activity. Shows a preferential cleavage at -Arg-Ser-Arg-Arg-|- and -Arg-Arg-Ser-Arg-|-, and of Z-Phe-Arg-|-aminomethylcoumarin sites. In terms of biological role, acts as an anticoagulant of the blood coagulation cascade of the bat's prey by inhibiting coagulation factor IX and activated coagulation factor X. This is Lactotransferrin from Desmodus rotundus (Vampire bat).